Reading from the N-terminus, the 744-residue chain is Serine/threonine-protein kinase GM11705 (744 aa).

A compositionally biased stretch (polar residues) spans 17–35 (VLSSHQPSPSATHPQSVPS). 2 disordered regions span residues 17-38 (VLSSHQPSPSATHPQSVPSKAN) and 54-78 (NVQEDNSYNRDCDSPVSSSSEPEKE). Doublecortin domains follow at residues 154-240 (LRIK…VEYN) and 309-392 (RIVT…AEDF). The region spanning 473–731 (YTLGRIIGDG…SEDILDHPWT (259 aa)) is the Protein kinase domain. ATP is bound by residues 479–487 (IGDGNFAIV) and lysine 502. The active-site Proton acceptor is the aspartate 594.

This sequence belongs to the protein kinase superfamily. CAMK Ser/Thr protein kinase family. CaMK subfamily.

It carries out the reaction L-seryl-[protein] + ATP = O-phospho-L-seryl-[protein] + ADP + H(+). The enzyme catalyses L-threonyl-[protein] + ATP = O-phospho-L-threonyl-[protein] + ADP + H(+). The chain is Serine/threonine-protein kinase GM11705 from Drosophila sechellia (Fruit fly).